Consider the following 335-residue polypeptide: MLGIWTLLPLVLTSVARLSSKSVNAQVTDINSKGLELRKTVTTVETQNLEGLHHDGQFCHKPCPPGERKARDCTVNGDEPDCVPCQEGKEYTDKAHFSSKCRRCRLCDEGHGLEVEINCTRTQNTKCRCKPNFFCNSTVCEHCDPCTKCEHGIIKECTLTSNTKCKEEGSRSNLGWLCLLLLPIPLIVWVKRKEVQKTCRKHRKENQGSHESPTLNPETVAINLSDVDLSKYITTIAGVMTLSQVKGFVRKNGVNEAKIDEIKNDNVQDTAEQKVQLLRNWHQLHGKKEAYDTLIKDLKKANLCTLAEKIQTIILKDITSDSENSNFRNEIQSLV.

An N-terminal signal peptide occupies residues 1–25 (MLGIWTLLPLVLTSVARLSSKSVNA). The Extracellular portion of the chain corresponds to 26-173 (QVTDINSKGL…KCKEEGSRSN (148 aa)). O-linked (GalNAc...) threonine glycosylation occurs at Thr28. TNFR-Cys repeat units lie at residues 47 to 83 (QNLE…PDCV), 84 to 127 (PCQE…NTKC), and 128 to 166 (RCKP…TKCK). 8 cysteine pairs are disulfide-bonded: Cys59/Cys73, Cys63/Cys82, Cys85/Cys101, Cys104/Cys119, Cys107/Cys127, Cys129/Cys143, Cys146/Cys157, and Cys149/Cys165. N-linked (GlcNAc...) asparagine glycosylation is found at Asn118 and Asn136. A helical transmembrane segment spans residues 174 to 190 (LGWLCLLLLPIPLIVWV). At 191 to 335 (KRKEVQKTCR…NFRNEIQSLV (145 aa)) the chain is on the cytoplasmic side. Residue Cys199 is the site of S-palmitoyl cysteine attachment. Ser209 is modified (phosphoserine). Residues 212–317 (SPTLNPETVA…EKIQTIILKD (106 aa)) form an interaction with HIPK3 region. Thr214 bears the Phosphothreonine mark. Ser225 carries the phosphoserine modification. The tract at residues 230–254 (SKYITTIAGVMTLSQVKGFVRKNGV) is interaction with CALM. The Death domain occupies 230-314 (SKYITTIAGV…TLAEKIQTII (85 aa)). A (Microbial infection) N-beta-linked (GlcNAc) arginine glycan is attached at Arg250.

Component of the death-induced signaling complex (DISC) composed of cell surface receptor FAS/CD95, adapter protein FADD and the CASP8 protease; recruitment of CASP8 to the complex is required for processing of CASP8 into the p18 and p10 subunits. Interacts directly (via DED domain) with NOL3 (via CARD domain); inhibits death-inducing signaling complex (DISC) assembly by inhibiting the increase in FAS-FADD binding induced by FAS activation. Binds DAXX. Interacts with HIPK3. Part of a complex containing HIPK3 and FADD. Binds RIPK1 and FAIM2. Interacts with BABAM2 and FEM1B. Interacts with CALM. In the absence of stimulation, interacts with BIRC2, DDX3X and GSK3B. The interaction with BIRC2 and DDX3X is further enhanced upon receptor stimulation and accompanied by DDX3X and BIRC2 cleavage. Post-translationally, (Microbial infection) Glycosylated at Arg-250 by enteropathogenic E.coli protein NleB1: arginine GlcNAcylation prevents homotypic/heterotypic death domain interactions. In terms of processing, palmitoylated. Palmitoylation by ZDHHC7 prevents the lysosomal degradation of FAS regulating its expression at the plasma membrane. N- and O-glycosylated. O-glycosylated with core 1 or possibly core 8 glycans. As to expression, isoform 1 and isoform 6 are expressed at equal levels in resting peripheral blood mononuclear cells. After activation there is an increase in isoform 1 and decrease in the levels of isoform 6.

The protein resides in the cell membrane. It is found in the membrane raft. Its subcellular location is the secreted. Its function is as follows. Receptor for TNFSF6/FASLG. The adapter molecule FADD recruits caspase CASP8 to the activated receptor. The resulting death-inducing signaling complex (DISC) performs CASP8 proteolytic activation which initiates the subsequent cascade of caspases (aspartate-specific cysteine proteases) mediating apoptosis. FAS-mediated apoptosis may have a role in the induction of peripheral tolerance, in the antigen-stimulated suicide of mature T-cells, or both. The secreted isoforms 2 to 6 block apoptosis (in vitro). The polypeptide is Tumor necrosis factor receptor superfamily member 6 (FAS) (Homo sapiens (Human)).